The primary structure comprises 363 residues: Electron transfer flavoprotein subunit alpha, mitochondrial (363 aa).

A mitochondrion-targeting transit peptide spans 1–24; that stretch reads MTRTVLLRALTKNKFVASNAPRSI. Residue 303–331 coordinates FAD; the sequence is LYMAFGVSGAIQHLAGIKDSKVIVAVNKD.

Belongs to the ETF alpha-subunit/FixB family. In terms of assembly, heterodimer of an alpha and a beta subunit. Requires FAD as cofactor.

It localises to the mitochondrion matrix. Its function is as follows. The electron transfer flavoprotein serves as a specific electron acceptor for several dehydrogenases, including five acyl-CoA dehydrogenases, glutaryl-CoA and sarcosine dehydrogenase. It transfers the electrons to the main mitochondrial respiratory chain via ETF-ubiquinone oxidoreductase (ETF dehydrogenase). Involved in leucine catabolism and in phytol degradation. This is Electron transfer flavoprotein subunit alpha, mitochondrial (ETFA) from Arabidopsis thaliana (Mouse-ear cress).